The following is a 794-amino-acid chain: Zinc finger protein 148 (794 aa).

A Glycyl lysine isopeptide (Lys-Gly) (interchain with G-Cter in SUMO2) cross-link involves residue Lys-6. At Ser-51 the chain carries Phosphoserine. Glycyl lysine isopeptide (Lys-Gly) (interchain with G-Cter in SUMO2) cross-links involve residues Lys-88, Lys-115, and Lys-132. The C2H2-type 1 zinc-finger motif lies at 171–193; it reads HVCEHCNAAFRTNYHLQRHVFIH. Position 194 is a phosphothreonine (Thr-194). 2 C2H2-type zinc fingers span residues 199–221 and 227–249; these read FQCS…EKIH and FRCD…KRTH. Residue Ser-250 is modified to Phosphoserine. The C2H2-type 4 zinc finger occupies 255–278; that stretch reads YQCEYCLQYFSRTDRVLKHKRMCH. Residue Lys-291 forms a Glycyl lysine isopeptide (Lys-Gly) (interchain with G-Cter in SUMO2) linkage. The tract at residues 298–336 is disordered; sequence EEDSGFSTSPKDNSLPKKKRQKTEKKSSGMDKESALDKS. Residues Ser-301 and Ser-306 each carry the phosphoserine modification. Lys-308 is covalently cross-linked (Glycyl lysine isopeptide (Lys-Gly) (interchain with G-Cter in SUMO2)). Over residues 321–336 the composition is skewed to basic and acidic residues; the sequence is EKKSSGMDKESALDKS. Residue Lys-356 forms a Glycyl lysine isopeptide (Lys-Gly) (interchain with G-Cter in SUMO1); alternate linkage. Lys-356 participates in a covalent cross-link: Glycyl lysine isopeptide (Lys-Gly) (interchain with G-Cter in SUMO2); alternate. A Glycyl lysine isopeptide (Lys-Gly) (interchain with G-Cter in SUMO2) cross-link involves residue Lys-402. At Ser-412 the chain carries Phosphoserine. Residues Lys-421 and Lys-424 each participate in a glycyl lysine isopeptide (Lys-Gly) (interchain with G-Cter in SUMO2) cross-link. Residues 574–588 show a composition bias toward polar residues; that stretch reads NSSEVPEVTPSENVG. The interval 574–596 is disordered; sequence NSSEVPEVTPSENVGSSSQASSS. Residue Lys-607 is modified to N6-acetyllysine. 2 positions are modified to phosphoserine: Ser-665 and Ser-784.

It belongs to the krueppel C2H2-type zinc-finger protein family. In terms of assembly, interacts with HNRNPDL. Interacts with the 5FMC complex; the interaction requires association with CHTOP. Interacts with CAVIN1. Sumoylated with SUMO2. Desumoylated by SENP3, resulting in the stimulation of transcription of its target genes.

The protein resides in the nucleus. In terms of biological role, involved in transcriptional regulation. Represses the transcription of a number of genes including gastrin, stromelysin and enolase. Binds to the G-rich box in the enhancer region of these genes. This chain is Zinc finger protein 148 (ZNF148), found in Homo sapiens (Human).